Reading from the N-terminus, the 262-residue chain is Abhydrolase domain-containing protein AKT2 (262 aa).

The Peroxisomal targeting signal type 1 motif lies at 260 to 262 (SKL).

Belongs to the AB hydrolase superfamily. AKT2 hydrolase family.

The protein localises to the peroxisome. It participates in mycotoxin biosynthesis. Its function is as follows. Abhydrolase domain-containing protein; part of the gene clusters that mediate the biosynthesis of the host-selective toxins (HSTs) AK-toxins responsible for Japanese pear black spot disease by the Japanese pear pathotype. AK-toxins are esters of 9,10-epoxy 8-hydroxy 9-methyldecatrienoic acid (EDA). On cellular level, AK-toxins affect plasma membrane of susceptible cells and cause a sudden increase in loss of K(+) after a few minutes of toxin treatment. The acyl-CoA ligase AKT1, the hydrolase AKT2 and enoyl-CoA hydratase AKT3 are all involved in the biosynthesis of the AK-, AF- and ACT-toxin common 9,10-epoxy-8-hydroxy-9-methyl-decatrienoic acid (EDA) structural moiety. Part of the EDA biosynthesis occurs in the peroxisome since these 3 enzymes are localized in peroxisomes. The exact roles of the 3 enzymes, as well as of additional AK-toxin clusters enzymes, including AKT4, AKT6 and AKTS1, have still to be elucidated. The Cytochrome P450 monooxygenase AKT7 on the other side functions to limit production of EDA and AK-toxin, probably via the catalysis of a side reaction of EDA or its precursor. This is Abhydrolase domain-containing protein AKT2 from Alternaria alternata (Alternaria rot fungus).